The primary structure comprises 498 residues: ATP synthase subunit beta, chloroplastic (498 aa).

172–179 (GGAGVGKT) provides a ligand contact to ATP.

It belongs to the ATPase alpha/beta chains family. As to quaternary structure, F-type ATPases have 2 components, CF(1) - the catalytic core - and CF(0) - the membrane proton channel. CF(1) has five subunits: alpha(3), beta(3), gamma(1), delta(1), epsilon(1). CF(0) has four main subunits: a(1), b(1), b'(1) and c(9-12).

The protein localises to the plastid. Its subcellular location is the chloroplast thylakoid membrane. The catalysed reaction is ATP + H2O + 4 H(+)(in) = ADP + phosphate + 5 H(+)(out). In terms of biological role, produces ATP from ADP in the presence of a proton gradient across the membrane. The catalytic sites are hosted primarily by the beta subunits. The protein is ATP synthase subunit beta, chloroplastic of Aristolochia macrophylla (Dutchman's pipe vine).